The chain runs to 411 residues: LL-diaminopimelate aminotransferase (411 aa).

Residues Tyr15 and Gly42 each contribute to the substrate site. Pyridoxal 5'-phosphate contacts are provided by residues Tyr72, 108–109, Tyr132, Asn187, Tyr218, and 246–248; these read SK and SFS. Substrate-binding residues include Lys109, Tyr132, and Asn187. Residue Lys249 is modified to N6-(pyridoxal phosphate)lysine. Arg257 and Asn292 together coordinate pyridoxal 5'-phosphate. Asn292 and Arg388 together coordinate substrate.

This sequence belongs to the class-I pyridoxal-phosphate-dependent aminotransferase family. LL-diaminopimelate aminotransferase subfamily. Homodimer. The cofactor is pyridoxal 5'-phosphate.

The enzyme catalyses (2S,6S)-2,6-diaminopimelate + 2-oxoglutarate = (S)-2,3,4,5-tetrahydrodipicolinate + L-glutamate + H2O + H(+). It participates in amino-acid biosynthesis; L-lysine biosynthesis via DAP pathway; LL-2,6-diaminopimelate from (S)-tetrahydrodipicolinate (aminotransferase route): step 1/1. In terms of biological role, involved in the synthesis of meso-diaminopimelate (m-DAP or DL-DAP), required for both lysine and peptidoglycan biosynthesis. Catalyzes the direct conversion of tetrahydrodipicolinate to LL-diaminopimelate. The polypeptide is LL-diaminopimelate aminotransferase (Cyanothece sp. (strain PCC 7425 / ATCC 29141)).